Here is a 214-residue protein sequence, read N- to C-terminus: Octanoyltransferase (214 aa).

The region spanning 28-203 is the BPL/LPL catalytic domain; sequence GSGAETLLLL…RFEGFLDEFM (176 aa). Substrate contacts are provided by residues 66–73, 133–135, and 146–148; these read RGGDVTYH, SIG, and GFA. Residue cysteine 164 is the Acyl-thioester intermediate of the active site.

Belongs to the LipB family.

It localises to the cytoplasm. It carries out the reaction octanoyl-[ACP] + L-lysyl-[protein] = N(6)-octanoyl-L-lysyl-[protein] + holo-[ACP] + H(+). It participates in protein modification; protein lipoylation via endogenous pathway; protein N(6)-(lipoyl)lysine from octanoyl-[acyl-carrier-protein]: step 1/2. Catalyzes the transfer of endogenously produced octanoic acid from octanoyl-acyl-carrier-protein onto the lipoyl domains of lipoate-dependent enzymes. Lipoyl-ACP can also act as a substrate although octanoyl-ACP is likely to be the physiological substrate. The chain is Octanoyltransferase from Geotalea uraniireducens (strain Rf4) (Geobacter uraniireducens).